The sequence spans 111 residues: Tubulin beta chain (111 aa).

Residues 82–111 form a disordered region; that stretch reads SEYQQYQDATAEDEGEFDEEEAEGEGQEYA. Over residues 91–111 the composition is skewed to acidic residues; it reads TAEDEGEFDEEEAEGEGQEYA.

This sequence belongs to the tubulin family. In terms of assembly, dimer of alpha and beta chains. A typical microtubule is a hollow water-filled tube with an outer diameter of 25 nm and an inner diameter of 15 nM. Alpha-beta heterodimers associate head-to-tail to form protofilaments running lengthwise along the microtubule wall with the beta-tubulin subunit facing the microtubule plus end conferring a structural polarity. Microtubules usually have 13 protofilaments but different protofilament numbers can be found in some organisms and specialized cells. Mg(2+) is required as a cofactor.

Its subcellular location is the cytoplasm. It localises to the cytoskeleton. In terms of biological role, tubulin is the major constituent of microtubules, a cylinder consisting of laterally associated linear protofilaments composed of alpha- and beta-tubulin heterodimers. Microtubules grow by the addition of GTP-tubulin dimers to the microtubule end, where a stabilizing cap forms. Below the cap, tubulin dimers are in GDP-bound state, owing to GTPase activity of alpha-tubulin. This is Tubulin beta chain from Lymnaea stagnalis (Great pond snail).